Reading from the N-terminus, the 341-residue chain is Thromboxane A2 receptor (341 aa).

Topologically, residues 1 to 29 (MWLNSTSLGACFRPVNITLQERRAIASPW) are extracellular. N-linked (GlcNAc...) asparagine glycosylation is found at Asn4 and Asn16. The helical transmembrane segment at 30-52 (FAASFCALGLGSNLLALSVLAGA) threads the bilayer. Over 53–65 (RPGAGPRSSFLAL) the chain is Cytoplasmic. A helical transmembrane segment spans residues 66 to 86 (LCGLVLTDFLGLLVTGAVVAS). Over 87-105 (QHAALLDWRATDPGCRLCH) the chain is Extracellular. Cys104 and Cys181 are joined by a disulfide. The chain crosses the membrane as a helical span at residues 106–127 (FMGAAMVFFGLCPLLLGAAMAA). The Cytoplasmic segment spans residues 128 to 147 (ERFVGITRPFSRPAATSRRA). A helical transmembrane segment spans residues 148–170 (WATVGLVWVGAGTLGLLPLLGLG). Over 171-191 (RYSVQYPGSWCFLTLGAERGD) the chain is Extracellular. Residues 192-217 (VAFGLMFALLGSVSVGLSLLLNTVSV) traverse the membrane as a helical segment. Over 218 to 244 (ATLCRVYHAREATQRPRDCEVEMMVQL) the chain is Cytoplasmic. Residues 245 to 268 (VGIMVVATVCWMPLLVFILQTLLQ) traverse the membrane as a helical segment. Residues 269-287 (TLPVMSPSGQLLRTTERQL) lie on the Extracellular side of the membrane. Residues 288-309 (LIYLRVATWNQILDPWVYILFR) traverse the membrane as a helical segment. Residues 310–341 (RSVLRRLHPRFTSQLQAVSLHSPPTQAMLSGP) lie on the Cytoplasmic side of the membrane. The residue at position 328 (Ser328) is a Phosphoserine.

This sequence belongs to the G-protein coupled receptor 1 family. Interacts with RPGRIP1L. Interacts with RACK1; the interaction regulates TBXA2R cell surface expression. As to expression, in the brain, expressed in all types of glial cells. In the kidney, expressed in the mesangial cells of the glomerulus, smooth muscle cells of the renal arterioles, and in transitional cell epithelium of renal pelvis.

It localises to the cell membrane. Its function is as follows. Receptor for thromboxane A2 (TXA2), a potent stimulator of platelet aggregation. The activity of this receptor is mediated by a G-protein that activates a phosphatidylinositol-calcium second messenger system. In the kidney, the binding of TXA2 to glomerular TP receptors causes intense vasoconstriction. Activates phospholipase C and adenylyl cyclase. The chain is Thromboxane A2 receptor (Tbxa2r) from Rattus norvegicus (Rat).